A 124-amino-acid chain; its full sequence is Large ribosomal subunit protein eL31 (124 aa).

The protein belongs to the eukaryotic ribosomal protein eL31 family.

This is Large ribosomal subunit protein eL31 (RpL31) from Spodoptera frugiperda (Fall armyworm).